Consider the following 379-residue polypeptide: MYFSEQNKMIRKLARDFAEKELTTEILDEVEESGEFPQEILDKMAKFGFFGIKIPKSLGGSGGDHMSYVICMEEFARVSGVASVYLSSPNSLAGGPLLLSGTEEQIEKYLKPIITGKKKLAFALTEPGAGSDAGGMSTTAVDMGDYYLLNGRKTFITMAPLCDDAVIYAKTDMSKGTRGISAFIVDLKSEGVSMGKNEHKMGLIGCATSDIIMEDVKVPKENRLGEVNKGFSNAMKTLDVGRLGVASQSIGVAQGALDEAIKYAKERKQFGKRIADFQAIAFMIADMATKLEAAKLLVYNAASLMDNKKNATKEASMAKFYASEICNEICAKAVQIHGGYGYIKEYKVERMYRDCRVFTIYEGTSQVQQMVISGMLLKK.

FAD-binding positions include 122–131 and 155–157; these read FALTEPGAGS and FIT. Residue serine 131 participates in substrate binding. 239 to 242 lines the substrate pocket; sequence DVGR. FAD is bound by residues arginine 267, glutamine 278, and 335–339; that span reads QIHGG. The active-site Proton acceptor is glutamate 362. Glycine 363 provides a ligand contact to substrate. 364 to 366 lines the FAD pocket; the sequence is TSQ.

It belongs to the acyl-CoA dehydrogenase family. As to quaternary structure, part of the homotrimeric caffeyl-CoA reductase-Etf complex composed of (R)-2-hydroxyisocaproyl-CoA dehydratase CarC, and the electron transfer flavoprotein (ETF) alpha (CarE) and beta (CarD) subunits. FAD serves as cofactor.

The protein resides in the cytoplasm. It carries out the reaction hydrocaffeoyl-CoA + 2 reduced [2Fe-2S]-[ferredoxin] + 2 NAD(+) = (E)-caffeoyl-CoA + 2 oxidized [2Fe-2S]-[ferredoxin] + 2 NADH. Its function is as follows. The Caffeyl-CoA reductase-Etf complex catalyzes the reduction of caffeyl-CoA to yield hydrocaffeyl-CoA. It couples the endergonic ferredoxin reduction with NADH as reductant to the exergonic reduction of caffeoyl-CoA with the same reductant. It uses the mechanism of electron bifurcation to overcome the steep energy barrier in ferredoxin reduction. Also reduces 4-coumaroyl-CoA and feruloyl-CoA. This Acetobacterium woodii (strain ATCC 29683 / DSM 1030 / JCM 2381 / KCTC 1655 / WB1) protein is Caffeyl-CoA reductase-Etf complex subunit CarC.